The chain runs to 78 residues: uncharacterized protein (78 aa).

Residues 13–33 (STILILLMSVLILLLSIDILA) form a helical membrane-spanning segment.

Its subcellular location is the membrane. This is an uncharacterized protein from Methanocaldococcus jannaschii (strain ATCC 43067 / DSM 2661 / JAL-1 / JCM 10045 / NBRC 100440) (Methanococcus jannaschii).